The primary structure comprises 182 residues: Thioredoxin F-type, chloroplastic (182 aa).

The transit peptide at Met1–Gly69 directs the protein to the chloroplast. One can recognise a Thioredoxin domain in the interval Pro70–Ser181. Catalysis depends on nucleophile residues Cys106 and Cys109. Cys106 and Cys109 are oxidised to a cystine.

The protein belongs to the thioredoxin family. Plant F-type subfamily. Forms a complex with heterodimeric ferredoxin-thioredoxin reductase (FTR) and ferredoxin.

It localises to the plastid. The protein resides in the chloroplast. Its function is as follows. Participates in various redox reactions through the reversible oxidation of the active center dithiol to a disulfide. The F form is known to activate a number of enzymes of the photosynthetic carbon cycle. The sequence is that of Thioredoxin F-type, chloroplastic from Pisum sativum (Garden pea).